An 881-amino-acid polypeptide reads, in one-letter code: Probable inorganic carbon transporter subunit DabA (881 aa).

Zn(2+)-binding residues include Cys-399, Asp-401, His-585, and Cys-600.

It belongs to the inorganic carbon transporter (TC 9.A.2) DabA family. Forms a complex with DabB. Zn(2+) serves as cofactor.

It is found in the cell membrane. Functionally, part of an energy-coupled inorganic carbon pump. The protein is Probable inorganic carbon transporter subunit DabA of Geobacillus sp. (strain WCH70).